The following is a 447-amino-acid chain: Phosphoglucosamine mutase (447 aa).

The active-site Phosphoserine intermediate is the Ser-100. Mg(2+)-binding residues include Ser-100, Asp-240, Asp-242, and Asp-244. Ser-100 carries the post-translational modification Phosphoserine.

The protein belongs to the phosphohexose mutase family. Mg(2+) is required as a cofactor. In terms of processing, activated by phosphorylation.

It catalyses the reaction alpha-D-glucosamine 1-phosphate = D-glucosamine 6-phosphate. In terms of biological role, catalyzes the conversion of glucosamine-6-phosphate to glucosamine-1-phosphate. The protein is Phosphoglucosamine mutase of Anoxybacillus flavithermus (strain DSM 21510 / WK1).